Consider the following 152-residue polypeptide: Large ribosomal subunit protein uL13 (152 aa).

It belongs to the universal ribosomal protein uL13 family. As to quaternary structure, part of the 50S ribosomal subunit.

Its function is as follows. This protein is one of the early assembly proteins of the 50S ribosomal subunit, although it is not seen to bind rRNA by itself. It is important during the early stages of 50S assembly. The polypeptide is Large ribosomal subunit protein uL13 (Wolbachia sp. subsp. Drosophila simulans (strain wRi)).